Here is a 263-residue protein sequence, read N- to C-terminus: Ycf3-interacting protein 1, chloroplastic (263 aa).

The N-terminal 71 residues, 1–71, are a transit peptide targeting the chloroplast; that stretch reads MASNMLQLSL…VNKEEDSATY (71 aa). The chain crosses the membrane as a helical span at residues 238–258; sequence ALYLVSAFPIIIGISVVLILF.

The protein belongs to the Y3IP1/CEST family. In terms of assembly, interacts with Ycf3.

It is found in the plastid. It localises to the chloroplast thylakoid membrane. Nuclear genome-encoded factor that participates in photosystem I (PSI) biogenesis. Cooperates with the plastid genome-encoded protein PSI assembly Ycf3 in the assembly of stable PSI units in the thylakoid membrane. The polypeptide is Ycf3-interacting protein 1, chloroplastic (Nicotiana tabacum (Common tobacco)).